The sequence spans 1131 residues: Tyrosine-protein kinase JAK2 (1131 aa).

Positions 1 to 239 are interaction with cytokine/interferon/growth hormone receptors; that stretch reads MGMACLTMTE…RYRFRRFIEQ (239 aa). In terms of domain architecture, FERM spans 37-380; the sequence is PVLQVYLYHS…GYYRLTADAH (344 aa). Tyrosine 119 carries the phosphotyrosine; by autocatalysis modification. A phosphotyrosine mark is found at tyrosine 372 and tyrosine 373. An SH2; atypical domain is found at 401 to 482; the sequence is HGPISMDFAI…NLKDLLNCYQ (82 aa). Serine 523 bears the Phosphoserine mark. The 265-residue stretch at 545-809 folds into the Protein kinase 1 domain; the sequence is LIFNESLGQG…AIIRDLNSLF (265 aa). A phosphotyrosine mark is found at tyrosine 570 and tyrosine 813. A Protein kinase 2 domain is found at 849 to 1126; sequence LKFLQQLGKG…RDLALRVDQI (278 aa). 855–863 contacts ATP; that stretch reads LGKGNFGSV. Position 868 is a phosphotyrosine; by autocatalysis (tyrosine 868). Lysine 882 provides a ligand contact to ATP. Phosphotyrosine; by autocatalysis occurs at positions 966 and 972. Residue aspartate 976 is the Proton acceptor of the active site. A phosphotyrosine; by autocatalysis mark is found at tyrosine 1007 and tyrosine 1008.

It belongs to the protein kinase superfamily. Tyr protein kinase family. JAK subfamily. In terms of assembly, interacts with IL23R, SKB1 and STAM2. Interacts with EPOR. Interacts with LYN. Interacts with SIRPA. Interacts with SH2B1. Interacts with TEC. Interacts with IFNGR2 (via intracellular domain). Interacts with LEPR (Isoform B). Interacts with HSP90AB1; promotes functional activation in a heat shock-dependent manner. Interacts with STRA6. Interacts with ASB2; the interaction targets JAK2 for Notch-induced proteasomal degradation. It depends on Mg(2+) as a cofactor. Post-translationally, autophosphorylated, leading to regulate its activity. Leptin promotes phosphorylation on tyrosine residues, including phosphorylation on Tyr-813. Autophosphorylation on Tyr-119 in response to EPO down-regulates its kinase activity. Autophosphorylation on Tyr-868, Tyr-966 and Tyr-972 in response to growth hormone (GH) are required for maximal kinase activity. Also phosphorylated by TEC. Phosphorylated on tyrosine residues in response to interferon gamma signaling. Phosphorylated on tyrosine residues in response to a signaling cascade that is activated by increased cellular retinol. Undergoes Notch-induced ubiquitination and subsequent proteasomal degradation which is mediated by ASB1 or ASB2, the substrate-recognition components of probable ECS E3 ubiquitin-protein ligase complexes.

Its subcellular location is the endomembrane system. The protein localises to the cytoplasm. It localises to the nucleus. The catalysed reaction is L-tyrosyl-[protein] + ATP = O-phospho-L-tyrosyl-[protein] + ADP + H(+). Its activity is regulated as follows. Regulated by autophosphorylation, can both activate or decrease activity. Heme regulates its activity by enhancing the phosphorylation on Tyr-1007 and Tyr-1008. Its function is as follows. Non-receptor tyrosine kinase involved in various processes such as cell growth, development, differentiation or histone modifications. Mediates essential signaling events in both innate and adaptive immunity. In the cytoplasm, plays a pivotal role in signal transduction via its association with type I receptors such as growth hormone (GHR), prolactin (PRLR), leptin (LEPR), erythropoietin (EPOR), thrombopoietin (THPO); or type II receptors including IFN-alpha, IFN-beta, IFN-gamma and multiple interleukins. Following ligand-binding to cell surface receptors, phosphorylates specific tyrosine residues on the cytoplasmic tails of the receptor, creating docking sites for STATs proteins. Subsequently, phosphorylates the STATs proteins once they are recruited to the receptor. Phosphorylated STATs then form homodimer or heterodimers and translocate to the nucleus to activate gene transcription. For example, cell stimulation with erythropoietin (EPO) during erythropoiesis leads to JAK2 autophosphorylation, activation, and its association with erythropoietin receptor (EPOR) that becomes phosphorylated in its cytoplasmic domain. Then, STAT5 (STAT5A or STAT5B) is recruited, phosphorylated and activated by JAK2. Once activated, dimerized STAT5 translocates into the nucleus and promotes the transcription of several essential genes involved in the modulation of erythropoiesis. Part of a signaling cascade that is activated by increased cellular retinol and that leads to the activation of STAT5 (STAT5A or STAT5B). In addition, JAK2 mediates angiotensin-2-induced ARHGEF1 phosphorylation. Plays a role in cell cycle by phosphorylating CDKN1B. Cooperates with TEC through reciprocal phosphorylation to mediate cytokine-driven activation of FOS transcription. In the nucleus, plays a key role in chromatin by specifically mediating phosphorylation of 'Tyr-41' of histone H3 (H3Y41ph), a specific tag that promotes exclusion of CBX5 (HP1 alpha) from chromatin. Up-regulates the potassium voltage-gated channel activity of KCNA3. This chain is Tyrosine-protein kinase JAK2, found in Sus scrofa (Pig).